The following is a 124-amino-acid chain: MARGSVILLAWLLLVATLSATLGLGMPTKEKRGWTLNSAGYLLGPHAIDNHRSFSDKHGLTGKRELPLEVEEGRLGSVAVPLPESNIVRTIMEFLSFLHLKEAGALDSLPGIPLATSSEDLEQS.

The N-terminal stretch at 1–19 (MARGSVILLAWLLLVATLS) is a signal peptide. Residues 20 to 30 (ATLGLGMPTKE) constitute a propeptide that is removed on maturation. Threonine amide is present on threonine 61. 2 positions are modified to phosphoserine: serine 117 and serine 118.

The protein belongs to the galanin family.

Its subcellular location is the secreted. Endocrine hormone of the central and peripheral nervous systems that binds and activates the G protein-coupled receptors GALR1, GALR2, and GALR3. This small neuropeptide may regulate diverse physiologic functions including contraction of smooth muscle of the gastrointestinal and genitourinary tract, growth hormone and insulin release and adrenal secretion. This chain is Galanin peptides (Gal), found in Rattus norvegicus (Rat).